The sequence spans 445 residues: Zinc finger protein 296 (445 aa).

Residues methionine 1–proline 10 are compositionally biased toward basic residues. A disordered region spans residues methionine 1–aspartate 20. Residue lysine 31 forms a Glycyl lysine isopeptide (Lys-Gly) (interchain with G-Cter in SUMO2) linkage. The disordered stretch occupies residues serine 62–threonine 88. 3 C2H2-type zinc fingers span residues leucine 138 to histidine 161, proline 212 to histidine 234, and tyrosine 240 to histidine 262. The disordered stretch occupies residues asparagine 256–glycine 359. Positions serine 269–glycine 278 are enriched in polar residues. Residues proline 320–glycine 332 show a composition bias toward gly residues. The segment covering lysine 338 to alanine 351 has biased composition (basic and acidic residues). C2H2-type zinc fingers lie at residues glycine 360 to histidine 382, tyrosine 388 to histidine 410, and valine 418 to histidine 441.

This sequence belongs to the krueppel C2H2-type zinc-finger protein family. As to quaternary structure, interacts with KLF4. In terms of tissue distribution, strongly expressed in testis and embryonic stem cells.

Its subcellular location is the nucleus. Its function is as follows. May be a transcriptional corepressor with KLF4. The sequence is that of Zinc finger protein 296 from Mus musculus (Mouse).